The sequence spans 463 residues: Asparagine--tRNA ligase (463 aa).

It belongs to the class-II aminoacyl-tRNA synthetase family. As to quaternary structure, homodimer.

The protein localises to the cytoplasm. It catalyses the reaction tRNA(Asn) + L-asparagine + ATP = L-asparaginyl-tRNA(Asn) + AMP + diphosphate + H(+). This Bacillus cytotoxicus (strain DSM 22905 / CIP 110041 / 391-98 / NVH 391-98) protein is Asparagine--tRNA ligase.